Here is a 1139-residue protein sequence, read N- to C-terminus: MASDEIVRNLISREEVMGNLISTASSSVRSPLHDVLCSHVRTIVDSVDKKAVSRKHEDVRRNISSEELQMLINAYPEYAVSSSACESGTHSMAACFRFLETEYLLDMVPMKETFVYDIGGNWFSHMKFRADREIHCCCPILSMRDSERLETRMMAMQKYMRGSKDKPLRLLSRYQNILREQAARTTAFMAGEVNAGVLDGDVFCENTFQDCVRRVPEGFLKTAIAVHSIYDIKVEEFASALKRKGITQAYGCFLFPPAVLIGQKEGILPSVDGHYLVENGRIKFFFANDPNAGYSHDLKDYLKYVEKTYVDIEDGVFAIELMQMRGDTMFFKITDVTAAMYHMKYRGMKRDETFKCIPLLKNSSVVVPLFSWDNRSLKITSGLLPRTLVEQGAAFIMKNKEKDLNVAVLKNYLSAVNNSYIFNGSQVRDGVKIAPDLISKLAVTLYLREKVYRQRENSIISYFEQEMLHDPNLKAMFGDFLWFVPNTLSSVWKNMRKSLMEWFGYAEFDLTTFDICDPVLYVEIVDRYKIIQKGRIPLGEFFDCHEECENYELREKEKNDLAVKMAQKVTGTVTECEKDLGPLVQPIKEILVQLVMPNLVRALCRPRSPTSPLDLKSIPGSTPSHSSSDSEHSMTEEASCTIAGSVPTWEIATRKDLTFQRIDEDMSRRTGMPPRPKVTSSYNMNARAEFLYYQLCSVICERAQILSVIEDFRQNLIFSDKVAVPLNARFYSFQSLRPGWVFKTPSHSEVGHSYAVHFDFKTIGTDLEESLAFCRMVPISWDKSGKYIATTPHFPERHGYYVICDNTKLCNNWLIYNKLVDVYALVADRPLRFELIDGVPGCGKSTMILNSCDIRREVVVGEGRNATDDLRERFKRKKNLNSKTANHRVRTLDSLLLAEGPCVPQADRFHFDEALKVHYGAIMFCADKLGASEILAQGDRAQLPMICRVEGIELQFQSPDYTKTIINPKLRSYRIPGDVAFYLSAKEFYKVKGIPQKVITSNSVKRSLYARGETTPERFVSLLDVPVRKDTHYLTFLQAEKESLMSHLIPKGVKKESISTIHEAQGGTYENVILVRLQRTPNEIYPGGPRSAPYIVVGTSRHTKTFTYCSVTDDKLLLDIADVGGIAHTPIRTFESHIV.

The interval 60–438 is methyltransferase; the sequence is RRNISSEELQ…DGVKIAPDLI (379 aa). One can recognise an Alphavirus-like MT domain in the interval 81–305; the sequence is SSSACESGTH…HDLKDYLKYV (225 aa). Positions 611 to 637 are disordered; sequence SPLDLKSIPGSTPSHSSSDSEHSMTEE. Positions 617-627 are enriched in low complexity; that stretch reads SIPGSTPSHSS. In terms of domain architecture, (+)RNA virus helicase ATP-binding spans 805-969; that stretch reads DNTKLCNNWL…DYTKTIINPK (165 aa). Residues 835-1109 form a helicase region; sequence LIDGVPGCGK…SRHTKTFTYC (275 aa). 838 to 845 lines the ATP pocket; that stretch reads GVPGCGKS. Positions 970–1139 constitute a (+)RNA virus helicase C-terminal domain; that stretch reads LRSYRIPGDV…PIRTFESHIV (170 aa).

As to quaternary structure, interacts with the suppressor of RNA silencing Gamma-B (via C-terminus).

Its subcellular location is the host chloroplast envelope. It catalyses the reaction ATP + H2O = ADP + phosphate + H(+). Functionally, probably contains methyltransferase and helicase activities. Methyltransferase displays a cytoplasmic capping enzyme activity. This function is necessary since all viral RNAs are synthesized in the cytoplasm, and host capping enzymes are restricted to the nucleus. Helicase region probably exhibits NTPase and RNA unwinding activities. The sequence is that of Replication protein alpha-A from Barley stripe mosaic virus (BSMV).